Consider the following 213-residue polypeptide: Large ribosomal subunit protein eL14 (213 aa).

Lys-79 is subject to N6-acetyllysine. Lys-85 carries the N6-acetyllysine; alternate modification. The residue at position 85 (Lys-85) is an N6-succinyllysine; alternate. Lys-124 participates in a covalent cross-link: Glycyl lysine isopeptide (Lys-Gly) (interchain with G-Cter in SUMO2). Position 139 is a phosphoserine (Ser-139). The disordered stretch occupies residues 166–213; that stretch reads TAGKKAPAQKAPAQKAAGQKAAPPPKAQKVQKPPAQKAPAPKASGEKA. The 1-1; approximate repeat unit spans residues 169–173; that stretch reads KKAPA. The tract at residues 169–188 is 4 X 5 AA tandem repeats of Q-K-A-[APS]-X; sequence KKAPAQKAPAQKAAGQKAAP. A run of 5 repeats spans residues 174-178, 179-183, 184-188, 191-193, and 194-196. The segment at 191 to 196 is 2 X 3 AA tandem repeats of K-G-Q; the sequence is KAQKVQ. Residue Lys-202 is modified to N6-succinyllysine.

Belongs to the eukaryotic ribosomal protein eL14 family. Component of the large ribosomal subunit.

It is found in the cytoplasm. Its function is as follows. Component of the large ribosomal subunit. The ribosome is a large ribonucleoprotein complex responsible for the synthesis of proteins in the cell. The sequence is that of Large ribosomal subunit protein eL14 (RPL14) from Sus scrofa (Pig).